Consider the following 86-residue polypeptide: Weak neurotoxin 10 (86 aa).

The first 21 residues, 1 to 21 (MKTLLLTLVVVTIVCLDLGYT), serve as a signal peptide directing secretion. Intrachain disulfides connect Cys-24–Cys-45, Cys-27–Cys-32, Cys-38–Cys-63, Cys-67–Cys-78, and Cys-79–Cys-84.

Belongs to the three-finger toxin family. Ancestral subfamily. Orphan group II sub-subfamily. In terms of tissue distribution, expressed by the venom gland.

It localises to the secreted. Functionally, binds with low affinity to muscular (alpha-1-beta-1-delta-epsilon/CHRNA1-CHRNB1-CHRND-CHRNE) and very low affinity to neuronal (alpha-7/CHRNA7) nicotinic acetylcholine receptor (nAChR). The protein is Weak neurotoxin 10 (WNTX10) of Naja sputatrix (Malayan spitting cobra).